The following is a 186-amino-acid chain: Pyridoxal 5'-phosphate synthase subunit PdxT (186 aa).

46 to 48 (GES) provides a ligand contact to L-glutamine. Residue C75 is the Nucleophile of the active site. L-glutamine-binding positions include R101 and 129–130 (IR). Catalysis depends on charge relay system residues H165 and E167.

It belongs to the glutaminase PdxT/SNO family. As to quaternary structure, in the presence of PdxS, forms a dodecamer of heterodimers. Only shows activity in the heterodimer.

The enzyme catalyses aldehydo-D-ribose 5-phosphate + D-glyceraldehyde 3-phosphate + L-glutamine = pyridoxal 5'-phosphate + L-glutamate + phosphate + 3 H2O + H(+). It catalyses the reaction L-glutamine + H2O = L-glutamate + NH4(+). It functions in the pathway cofactor biosynthesis; pyridoxal 5'-phosphate biosynthesis. Its function is as follows. Catalyzes the hydrolysis of glutamine to glutamate and ammonia as part of the biosynthesis of pyridoxal 5'-phosphate. The resulting ammonia molecule is channeled to the active site of PdxS. The polypeptide is Pyridoxal 5'-phosphate synthase subunit PdxT (Staphylococcus aureus (strain Mu3 / ATCC 700698)).